The sequence spans 261 residues: Protein-ADP-ribose hydrolase (261 aa).

The 188-residue stretch at 74-261 (ADLKPVTGRG…DEALYNKLMS (188 aa)) folds into the Macro domain. Residues Asp-93, Ile-94, and Asn-107 each contribute to the ADP-D-ribose site. Residues Cys-113, His-118, and Cys-120 each coordinate Zn(2+). Positions 120, 121, 122, 211, 212, 213, and 215 each coordinate ADP-D-ribose.

Belongs to the MacroD-type family. Zn-Macro subfamily. Zn(2+) serves as cofactor.

The enzyme catalyses 4-O-(ADP-D-ribosyl)-L-aspartyl-[protein] + H2O = L-aspartyl-[protein] + ADP-D-ribose + H(+). ADP-ribosylhydrolase that specifically reverses the SirTM-mediated mono-ADP-ribosylation at an asparatate residue of GcvH-L, by releasing ADP-ribose from the target protein. May play a role in the regulation of the response to host-induced oxidative stress. This Treponema medium protein is Protein-ADP-ribose hydrolase.